The sequence spans 944 residues: UvrABC system protein A (944 aa).

33 to 40 contributes to the ATP binding site; the sequence is GLSGSGKS. The C4-type zinc finger occupies 252 to 279; that stretch reads CPICGFSIGELEPRMFSFNSPFGACPTC. ABC transporter domains follow at residues 309–587 and 607–935; these read WEPT…KKSL and ITDR…QYLK. 639-646 serves as a coordination point for ATP; it reads GVSGSGKS. Residues 738–764 form a C4-type zinc finger; it reads CEACKGDGIIKIEMHFLPDVYVPCEVC.

Belongs to the ABC transporter superfamily. UvrA family. Forms a heterotetramer with UvrB during the search for lesions.

The protein localises to the cytoplasm. Functionally, the UvrABC repair system catalyzes the recognition and processing of DNA lesions. UvrA is an ATPase and a DNA-binding protein. A damage recognition complex composed of 2 UvrA and 2 UvrB subunits scans DNA for abnormalities. When the presence of a lesion has been verified by UvrB, the UvrA molecules dissociate. This Staphylococcus epidermidis (strain ATCC 12228 / FDA PCI 1200) protein is UvrABC system protein A.